The primary structure comprises 166 residues: Small ribosomal subunit protein uS5 (166 aa).

Residues 11–74 (LNEKLIAVNR…EKARRNMFTI (64 aa)) form the S5 DRBM domain.

Belongs to the universal ribosomal protein uS5 family. Part of the 30S ribosomal subunit. Contacts proteins S4 and S8.

Functionally, with S4 and S12 plays an important role in translational accuracy. Located at the back of the 30S subunit body where it stabilizes the conformation of the head with respect to the body. The protein is Small ribosomal subunit protein uS5 of Aliivibrio fischeri (strain ATCC 700601 / ES114) (Vibrio fischeri).